The following is a 143-amino-acid chain: Large ribosomal subunit protein uL16c (143 aa).

It belongs to the universal ribosomal protein uL16 family. Part of the 50S ribosomal subunit.

Its subcellular location is the plastid. It is found in the chloroplast. In Chlorokybus atmophyticus (Soil alga), this protein is Large ribosomal subunit protein uL16c.